We begin with the raw amino-acid sequence, 585 residues long: A-type ATP synthase subunit A (585 aa).

237 to 244 (GPFGSGKT) contributes to the ATP binding site.

This sequence belongs to the ATPase alpha/beta chains family. Has multiple subunits with at least A(3), B(3), C, D, E, F, H, I and proteolipid K(x).

The protein resides in the cell membrane. It catalyses the reaction ATP + H2O + 4 H(+)(in) = ADP + phosphate + 5 H(+)(out). In terms of biological role, component of the A-type ATP synthase that produces ATP from ADP in the presence of a proton gradient across the membrane. The A chain is the catalytic subunit. The polypeptide is A-type ATP synthase subunit A (Natronomonas pharaonis (strain ATCC 35678 / DSM 2160 / CIP 103997 / JCM 8858 / NBRC 14720 / NCIMB 2260 / Gabara) (Halobacterium pharaonis)).